The sequence spans 557 residues: Protein NRT1/ PTR FAMILY 5.10 (557 aa).

Helical transmembrane passes span 49 to 67 (FAYY…GPLG) and 79 to 99 (AWSG…DSFL). A Phosphothreonine modification is found at T104. 10 consecutive transmembrane segments (helical) span residues 105-125 (ILAA…SAMI), 144-164 (VITF…HKPC), 186-206 (SFFN…LWVL), 215-235 (WALG…VLLL), 320-340 (APIW…PTFF), 365-385 (FISL…IPIA), 401-421 (IGTG…VEMK), 443-463 (VWWL…AMVG), 479-499 (VGLA…SFMI), and 526-546 (YFYW…LYVA).

The protein belongs to the major facilitator superfamily. Proton-dependent oligopeptide transporter (POT/PTR) (TC 2.A.17) family. In terms of tissue distribution, expressed in shoots, roots and stems. Detected in leaves, flowers and siliques.

The protein resides in the membrane. The polypeptide is Protein NRT1/ PTR FAMILY 5.10 (NPF5.10) (Arabidopsis thaliana (Mouse-ear cress)).